The chain runs to 538 residues: Mitochondrial distribution and morphology protein 34 (538 aa).

Residues 1–224 (MSFRFDRSVF…LPTALFNMSQ (224 aa)) form the SMP-LTD domain. 2 disordered regions span residues 26–55 (ALNPKSRRHVERADEAGNEDDSSGHQRKSG) and 231–251 (DGSRSSAKHKKDTCDENNQPS).

This sequence belongs to the MDM34 family. In terms of assembly, component of the ER-mitochondria encounter structure (ERMES) or MDM complex, composed of MMM1, MDM10, MDM12 and MDM34.

The protein localises to the mitochondrion outer membrane. Functionally, component of the ERMES/MDM complex, which serves as a molecular tether to connect the endoplasmic reticulum (ER) and mitochondria. Components of this complex are involved in the control of mitochondrial shape and protein biogenesis, and function in nonvesicular lipid trafficking between the ER and mitochondria. MDM34 is required for the interaction of the ER-resident membrane protein MMM1 and the outer mitochondrial membrane-resident beta-barrel protein MDM10. This chain is Mitochondrial distribution and morphology protein 34, found in Candida glabrata (strain ATCC 2001 / BCRC 20586 / JCM 3761 / NBRC 0622 / NRRL Y-65 / CBS 138) (Yeast).